A 1089-amino-acid polypeptide reads, in one-letter code: Pentatricopeptide repeat-containing protein MRL1, chloroplastic (1089 aa).

A chloroplast-targeting transit peptide spans 1-72 (MEVTSTTFIS…SIRSPRLVVR (72 aa)). PPR repeat units follow at residues 466–500 (TMSTFNMLMSVCASSQDIEGARGVLRLVQESGMTA), 501–535 (DCKLYTTLISSCAKSGKVDAMFEVFHQMSNSGVEA), 536–570 (NLHTFGALIDGCARAGQVAKAFGAYGILRSKNVKP), 571–605 (DRVVFNALISACGQSGAVDRAFDVLAEMKAETHPI), 608–642 (DHISIGALMKACCNAGQVERAKEVYQMIHKYGIRG), 643–677 (TPEVYTIAVNSCSKSGDWDFACSIYKDMKEKDVTP), 678–712 (DEVFFSALIDVAGHAKMLDEAFGILQDAKSQGIRL), 713–747 (GTISYSSLMGACCNAKDWKKALELYEKIKSIKLRP), 748–782 (TISTMNALITALCEGNQLPKAMEYLDEIKTLGLKP), and 783–817 (NTITYSMLMLASERKDDFEVSFKLLSQAKGDGVSP).

The protein belongs to the PPR family. P subfamily. In terms of tissue distribution, expressed in stems, leaves and sepals.

It localises to the plastid. The protein resides in the chloroplast. Regulator of the large subunit (LS) of RuBisCO. Involved either in the processing or in the stabilization of the processed transcript, probably by acting as a barrier to the 5'&gt;3' degradation. The polypeptide is Pentatricopeptide repeat-containing protein MRL1, chloroplastic (MRL1) (Arabidopsis thaliana (Mouse-ear cress)).